The following is a 480-amino-acid chain: M-phase inducer phosphatase cdc-25.2 (480 aa).

Over residues 1-20 the composition is skewed to polar residues; it reads MNRPSQISQDVAQPLSNQHE. Positions 1-35 are disordered; the sequence is MNRPSQISQDVAQPLSNQHETAMMSSDEDSMSRDS. The Rhodanese domain maps to 243–349; it reads FDDKYILIDC…FFFAANEANI (107 aa). The segment at 411 to 452 is disordered; that stretch reads TSAPSTSTENIDTNDDCQKSRTPAVPRIASRRNLFSDPSHSP.

Belongs to the MPI phosphatase family.

It catalyses the reaction O-phospho-L-tyrosyl-[protein] + H2O = L-tyrosyl-[protein] + phosphate. Its function is as follows. Required for intestinal cell division following the 16E cell stage of embryogenesis. Regulates intestinal cell divisions and binucleations probably by modulating the activity of the cell cycle regulator wee-1.3 and by activating the cdk-1/cyb-1 complex. Plays a role in male tail development, via regulation of the cell divisions of the ray precursor cell lineages, perhaps acting together with cell cycle regulators cyl-1, cdk-1, cyb-3, and cyd-1. In Caenorhabditis elegans, this protein is M-phase inducer phosphatase cdc-25.2.